The chain runs to 597 residues: NADPH-dependent diflavin oxidoreductase 1 (597 aa).

A Flavodoxin-like domain is found at 6–150; that stretch reads LLVLFGSQTG…AVDPWLRDLW (145 aa). Residues 12–17, 59–62, 97–106, and Asp132 contribute to the FMN site; these read SQTGTA, ATTG, and LGDSSYAKFN. Residues 188 to 207 form a disordered region; that stretch reads GSEGQRVAHPGSQEPPSESK. The region spanning 206–447 is the FAD-binding FR-type domain; it reads SKPFLAPMIS…VRPGSLAFPE (242 aa). FAD is bound by residues Arg350, 382–385, and 416–419; these read RAFS and GLCS. NADP(+)-binding positions include Thr460, 515 to 516, 521 to 525, and Asp558; these read SR and KVYVQ. Trp596 contributes to the FAD binding site.

The protein belongs to the NADPH-dependent diflavin oxidoreductase NDOR1 family. It in the N-terminal section; belongs to the flavodoxin family. In the C-terminal section; belongs to the flavoprotein pyridine nucleotide cytochrome reductase family. Interacts with CIAPIN1; as part of the cytosolic iron-sulfur (Fe-S) protein assembly (CIA) machinery. Interacts with DCPS. FAD serves as cofactor. FMN is required as a cofactor. In terms of tissue distribution, low expression in brain, heart, kidney, pancreas, prostate and skeletal muscle. Highest levels in the placenta. Expressed in cancer cell lines including promyelocytic leukemia, HeLaS3, chronic myelagenous leukemia, lymphoblastic leukemia, Burkitt's lymphoma, colorectal adenocarcinoma, lung carcinoma, and melanoma G-361.

It localises to the cytoplasm. Its subcellular location is the perinuclear region. The catalysed reaction is 2 oxidized [2Fe-2S]-[protein] + NADPH = 2 reduced [2Fe-2S]-[protein] + NADP(+) + H(+). Functionally, NADPH-dependent reductase which is a central component of the cytosolic iron-sulfur (Fe-S) protein assembly (CIA) machinery. Transfers electrons from NADPH via its FAD and FMN prosthetic groups to the [2Fe-2S] cluster of CIAPIN1, another key component of the CIA machinery. In turn, this reduced cluster provides electrons for assembly of cytosolic iron-sulfur cluster proteins. It can also reduce the [2Fe-2S] cluster of CISD1 and activate this protein implicated in Fe/S cluster repair. In vitro can fully activate methionine synthase/MTR in the presence of soluble cytochrome b5/CYB5A. This is NADPH-dependent diflavin oxidoreductase 1 from Homo sapiens (Human).